An 87-amino-acid chain; its full sequence is Small ribosomal subunit protein bS18 (87 aa).

It belongs to the bacterial ribosomal protein bS18 family. In terms of assembly, part of the 30S ribosomal subunit. Forms a tight heterodimer with protein bS6.

Its function is as follows. Binds as a heterodimer with protein bS6 to the central domain of the 16S rRNA, where it helps stabilize the platform of the 30S subunit. The polypeptide is Small ribosomal subunit protein bS18 (Oleidesulfovibrio alaskensis (strain ATCC BAA-1058 / DSM 17464 / G20) (Desulfovibrio alaskensis)).